The chain runs to 487 residues: ATP-dependent 6-phosphofructokinase (487 aa).

Residues G107, 173 to 174 (RG), 198 to 201 (GDGT), and K226 each bind ATP. D199 is a binding site for Mg(2+). Substrate is bound by residues 227 to 229 (TID), 272 to 274 (MGR), and E325. Residue D229 is the Proton acceptor of the active site. Position 341 to 343 (341 to 343 (SGN)) interacts with ATP. 380-383 (YMIR) contributes to the substrate binding site. The Peroxisomal targeting signal signature appears at 485-487 (AKL).

Belongs to the phosphofructokinase type A (PFKA) family. PPi-dependent PFK group II subfamily. Atypical ATP-dependent clade 'X' sub-subfamily. In terms of assembly, homotetramer. Mg(2+) serves as cofactor.

The protein localises to the glycosome. It carries out the reaction beta-D-fructose 6-phosphate + ATP = beta-D-fructose 1,6-bisphosphate + ADP + H(+). It functions in the pathway carbohydrate degradation; glycolysis; D-glyceraldehyde 3-phosphate and glycerone phosphate from D-glucose: step 3/4. With respect to regulation, allosterically activated by AMP. Its function is as follows. Catalyzes the phosphorylation of D-fructose 6-phosphate to fructose 1,6-bisphosphate by ATP, the first committing step of glycolysis. This chain is ATP-dependent 6-phosphofructokinase, found in Trypanosoma brucei brucei.